The primary structure comprises 188 residues: Acireductone dioxygenase (188 aa).

Positions 97, 99, 103, and 141 each coordinate Fe(2+). Residues His97, His99, Glu103, and His141 each coordinate Ni(2+).

It belongs to the acireductone dioxygenase (ARD) family. In terms of assembly, monomer. Fe(2+) serves as cofactor. Ni(2+) is required as a cofactor.

It carries out the reaction 1,2-dihydroxy-5-(methylsulfanyl)pent-1-en-3-one + O2 = 3-(methylsulfanyl)propanoate + CO + formate + 2 H(+). The enzyme catalyses 1,2-dihydroxy-5-(methylsulfanyl)pent-1-en-3-one + O2 = 4-methylsulfanyl-2-oxobutanoate + formate + 2 H(+). It functions in the pathway amino-acid biosynthesis; L-methionine biosynthesis via salvage pathway; L-methionine from S-methyl-5-thio-alpha-D-ribose 1-phosphate: step 5/6. Catalyzes 2 different reactions between oxygen and the acireductone 1,2-dihydroxy-3-keto-5-methylthiopentene (DHK-MTPene) depending upon the metal bound in the active site. Fe-containing acireductone dioxygenase (Fe-ARD) produces formate and 2-keto-4-methylthiobutyrate (KMTB), the alpha-ketoacid precursor of methionine in the methionine recycle pathway. Ni-containing acireductone dioxygenase (Ni-ARD) produces methylthiopropionate, carbon monoxide and formate, and does not lie on the methionine recycle pathway. This is Acireductone dioxygenase from Gluconobacter oxydans (strain 621H) (Gluconobacter suboxydans).